The following is a 771-amino-acid chain: Solute carrier family 7 member 14 (771 aa).

The next 6 membrane-spanning stretches (helical) occupy residues 58-78 (LISL…SGLV), 83-103 (AGPG…LSGV), 119-141 (AYTY…NLIL), 187-207 (YPDL…ALGV), 216-236 (VLNV…LFFI), and 251-271 (WSGV…FDII). Asn-282 carries N-linked (GlcNAc...) asparagine glycosylation. 4 consecutive transmembrane segments (helical) span residues 291–311 (ASLV…TLMV), 336–356 (FVVA…SLFP), 384–404 (PVVA…LVSL), and 407–427 (LIEM…VCVL). Ser-465, Ser-468, Ser-475, and Ser-488 each carry phosphoserine. A run of 4 helical transmembrane segments spans residues 565–585 (VTIC…FIIF), 596–616 (WAIL…FVIL), 628–648 (MAPC…YLML), and 655–675 (WIRF…YGIW). Asn-676 carries N-linked (GlcNAc...) asparagine glycosylation. The segment at 735–771 (SDAKANSRTSSKAKSKSKHKQNSEALIANDELDCSPE) is disordered. The span at 745 to 754 (SKAKSKSKHK) shows a compositional bias: basic residues. Phosphoserine is present on residues Ser-757 and Ser-769.

The protein belongs to the amino acid-polyamine-organocation (APC) superfamily. As to expression, expressed in retina, brain and spinal cord. In the retina, expressed in the inner nuclear layer and photoreceptor layer (at protein level). Expressed in liver, spleen, lung, kidney intestine and brain (at protein level).

The protein resides in the lysosome membrane. The enzyme catalyses 4-aminobutanoate(in) = 4-aminobutanoate(out). Functionally, imports 4-aminobutanoate (GABA) into lysosomes. May act as a GABA sensor that regulates mTORC2-dependent INS signaling and gluconeogenesis. The transport mechanism and substrate selectivity remain to be elucidated. This Mus musculus (Mouse) protein is Solute carrier family 7 member 14.